A 472-amino-acid polypeptide reads, in one-letter code: NADH-quinone oxidoreductase subunit N 2 (472 aa).

13 helical membrane passes run 3–23, 34–54, 67–87, 106–126, 156–176, 198–218, 233–253, 263–283, 291–311, 317–337, 360–380, 398–418, and 441–461; these read WMSFAPELITLTSALWFLLLS, HVAALVLSALGLAACLASVGA, LFSQVFKVLLAAGLFLIVTLC, FVCTLAMMLLVGANHFLVVFI, FLVGIFASGVMIFGLALLYGA, VVIGLLLTLSGFFFKLAVFPF, VSAYIATASKVAAIGVLVRVI, LVHVLAVLSVVSMTVGNLAAI, LLAYSTVAHAGYVLIGVLSMN, AAVFYAFALLVMKFTAFLVLV, ILALALMVSLFSLAGIPPTVG, TLVLIAMINVVISLYYYLLVI, and LLSGVLVIAMVAAGFFPNQII.

It belongs to the complex I subunit 2 family. As to quaternary structure, NDH-1 is composed of 14 different subunits. Subunits NuoA, H, J, K, L, M, N constitute the membrane sector of the complex.

The protein resides in the cell inner membrane. It catalyses the reaction a quinone + NADH + 5 H(+)(in) = a quinol + NAD(+) + 4 H(+)(out). Functionally, NDH-1 shuttles electrons from NADH, via FMN and iron-sulfur (Fe-S) centers, to quinones in the respiratory chain. The immediate electron acceptor for the enzyme in this species is believed to be ubiquinone. Couples the redox reaction to proton translocation (for every two electrons transferred, four hydrogen ions are translocated across the cytoplasmic membrane), and thus conserves the redox energy in a proton gradient. The chain is NADH-quinone oxidoreductase subunit N 2 from Syntrophobacter fumaroxidans (strain DSM 10017 / MPOB).